The sequence spans 402 residues: Deoxyguanosinetriphosphate triphosphohydrolase-like protein (402 aa).

Residues 69-217 form the HD domain; it reads RLTHSLEVAQ…AAIADDIAYD (149 aa).

It belongs to the dGTPase family. Type 2 subfamily.

This is Deoxyguanosinetriphosphate triphosphohydrolase-like protein from Bradyrhizobium diazoefficiens (strain JCM 10833 / BCRC 13528 / IAM 13628 / NBRC 14792 / USDA 110).